The primary structure comprises 619 residues: DNA mismatch repair protein MutL (619 aa).

It belongs to the DNA mismatch repair MutL/HexB family.

In terms of biological role, this protein is involved in the repair of mismatches in DNA. It is required for dam-dependent methyl-directed DNA mismatch repair. May act as a 'molecular matchmaker', a protein that promotes the formation of a stable complex between two or more DNA-binding proteins in an ATP-dependent manner without itself being part of a final effector complex. This chain is DNA mismatch repair protein MutL, found in Xylella fastidiosa (strain 9a5c).